The primary structure comprises 327 residues: GMP reductase (327 aa).

The Thioimidate intermediate role is filled by cysteine 175. Residue 204–227 (IIADGGIRTPGDIAKSIRFGATMV) participates in NADP(+) binding.

The protein belongs to the IMPDH/GMPR family. GuaC type 2 subfamily.

It catalyses the reaction IMP + NH4(+) + NADP(+) = GMP + NADPH + 2 H(+). Catalyzes the irreversible NADPH-dependent deamination of GMP to IMP. It functions in the conversion of nucleobase, nucleoside and nucleotide derivatives of G to A nucleotides, and in maintaining the intracellular balance of A and G nucleotides. In Clostridium acetobutylicum (strain ATCC 824 / DSM 792 / JCM 1419 / IAM 19013 / LMG 5710 / NBRC 13948 / NRRL B-527 / VKM B-1787 / 2291 / W), this protein is GMP reductase.